A 138-amino-acid chain; its full sequence is Superoxide dismutase [Mn] (138 aa).

Mn(2+) is bound by residues His-2, His-49, Asp-133, and His-137.

It belongs to the iron/manganese superoxide dismutase family. Mn(2+) serves as cofactor.

It carries out the reaction 2 superoxide + 2 H(+) = H2O2 + O2. Functionally, destroys superoxide anion radicals which are normally produced within the cells and which are toxic to biological systems. This is Superoxide dismutase [Mn] (sodA) from Mycobacterium szulgai.